Consider the following 65-residue polypeptide: Small ribosomal subunit protein bS21 (65 aa).

The segment at E39–D65 is disordered. The span at I43–D65 shows a compositional bias: basic residues.

The protein belongs to the bacterial ribosomal protein bS21 family.

In Pelobacter propionicus (strain DSM 2379 / NBRC 103807 / OttBd1), this protein is Small ribosomal subunit protein bS21.